Here is a 207-residue protein sequence, read N- to C-terminus: MTEPHANKQLEILRFIYDTVEERAFPPTVREICSAVDLSSTSTVHGHLARLEKKGYILKDATKPRAIEVTEKGREALGIKPKDIPVVGVVTAGQPILAVQDIDEYFPLPPDLENDAGELFMLRVHGESMINAGILNGDHVIVRKQSSANNGEIVVAMTEDNEATVKRFFKEDGYYRLQPENDTMDPIILPVVQILGKVVGLYRNNID.

The segment at residues 29 to 49 (VREICSAVDLSSTSTVHGHLA) is a DNA-binding region (H-T-H motif). Catalysis depends on for autocatalytic cleavage activity residues serine 128 and lysine 166.

Belongs to the peptidase S24 family. In terms of assembly, homodimer.

The catalysed reaction is Hydrolysis of Ala-|-Gly bond in repressor LexA.. Its function is as follows. Represses a number of genes involved in the response to DNA damage (SOS response), including recA and lexA. In the presence of single-stranded DNA, RecA interacts with LexA causing an autocatalytic cleavage which disrupts the DNA-binding part of LexA, leading to derepression of the SOS regulon and eventually DNA repair. The polypeptide is LexA repressor (Lactobacillus johnsonii (strain CNCM I-12250 / La1 / NCC 533)).